Reading from the N-terminus, the 279-residue chain is Energy-coupling factor transporter ATP-binding protein EcfA1 (279 aa).

In terms of domain architecture, ABC transporter spans 6 to 240 (VRLEHVFYKY…ADAMREIGLG (235 aa)). Residue 40–47 (GHNGSGKS) participates in ATP binding.

It belongs to the ABC transporter superfamily. Energy-coupling factor EcfA family. In terms of assembly, forms a stable energy-coupling factor (ECF) transporter complex composed of 2 membrane-embedded substrate-binding proteins (S component), 2 ATP-binding proteins (A component) and 2 transmembrane proteins (T component).

Its subcellular location is the cell membrane. Functionally, ATP-binding (A) component of a common energy-coupling factor (ECF) ABC-transporter complex. Unlike classic ABC transporters this ECF transporter provides the energy necessary to transport a number of different substrates. In Listeria monocytogenes serovar 1/2a (strain ATCC BAA-679 / EGD-e), this protein is Energy-coupling factor transporter ATP-binding protein EcfA1.